The following is a 265-amino-acid chain: uncharacterized protein (265 aa).

This is an uncharacterized protein from Mycoplasma capricolum subsp. capricolum (strain California kid / ATCC 27343 / NCTC 10154).